The chain runs to 2646 residues: Probable inactive serine/threonine-protein kinase roco10 (2646 aa).

7 disordered regions span residues 28–122 (LNYS…LSGG), 138–168 (NIPI…KDKD), 205–248 (PLFI…VSPS), 281–457 (QQQR…VKQA), 477–516 (MSKL…HTSP), 605–656 (TSPN…PHQY), and 882–907 (QSSS…STPS). A compositionally biased stretch (polar residues) spans 46-56 (PQQNLLENDTL). Composition is skewed to low complexity over residues 78 to 115 (IITT…TSPS), 147 to 161 (SPTS…NNNN), and 215 to 228 (SRNN…GGNK). Polar residues predominate over residues 235–248 (KISSTSAAGDVSPS). Composition is skewed to low complexity over residues 285–297 (NGNN…NNNN) and 325–334 (NNNNNNNNNN). Residues 335–345 (KQPQHPMNGNH) show a composition bias toward polar residues. A compositionally biased stretch (low complexity) spans 346–394 (SPSNGTSGSLSMSGSGIDNGGNNNNNSNTHGSSSNQSSGVTSPIIQSTS). Polar residues-rich tracts occupy residues 402–416 (GLNS…SSPT) and 428–443 (TSAS…PLMN). Low complexity-rich tracts occupy residues 444 to 454 (STGVSSSSSGV), 491 to 516 (PSSP…HTSP), 605 to 627 (TSPN…NSSP), 634 to 651 (QQQQ…NTNT), and 883 to 907 (SSSS…STPS). The Rho-GAP domain maps to 585-807 (SSISPISTAA…MFIQQADILF (223 aa)). 15 LRR repeats span residues 968–987 (QKLD…IKQL), 989–1011 (DLQE…ARLT), 1012–1033 (SLRT…MADF), 1040–1061 (NLEN…YTWL), 1062–1083 (KLKT…IFQI), 1085–1108 (TLEV…CTST), 1109–1131 (KLRS…INLV), 1132–1154 (ELQV…QKLT), 1155–1176 (SLTE…LLLL), 1178–1199 (NLKK…IHRM), 1201–1222 (SLIE…IVAL), 1224–1247 (KLNS…YIQK), 1248–1270 (GKEG…YRTR), 1271–1298 (IIML…SFSS), and 1303–1327 (LPSL…ILDI). The Roc domain occupies 1262 to 1474 (TNVPCYRTRI…RDIKQMIAKN (213 aa)). Disordered stretches follow at residues 1293-1317 (KSSF…SNNS), 1651-1670 (NNNN…SRSM), and 1957-2026 (NNSS…KEKE). A compositionally biased stretch (low complexity) spans 1651–1669 (NNNNSNGNNVGRGRSGSRS). The span at 1966–1975 (PIASSRSNPK) shows a compositional bias: polar residues. Positions 1983–1996 (NLIQSNNNDNNNSL) are enriched in low complexity. A compositionally biased stretch (basic and acidic residues) spans 1997 to 2026 (SKKDLKELAKQNKEKEKEKEKDKDKEKEKE). A Protein kinase domain is found at 2049–2342 (FSICHFIKEI…PSKIISQLYT (294 aa)). Residues 2055-2063 (IKEIDYREI) and K2094 contribute to the ATP site. The RGS domain maps to 2412-2536 (MVVLNNKQST…FTVPTTNKNG (125 aa)).

Belongs to the protein kinase superfamily. TKL Ser/Thr protein kinase family. ROCO subfamily.

This is Probable inactive serine/threonine-protein kinase roco10 (roco10) from Dictyostelium discoideum (Social amoeba).